The chain runs to 54 residues: ATP synthase F(0) complex subunit 8 (54 aa).

The helical transmembrane segment at 13-35 threads the bilayer; it reads ALSLWVCFPLMMLSLSSFLPLTL.

It belongs to the ATPase protein 8 family. Component of the ATP synthase complex composed at least of ATP5F1A/subunit alpha, ATP5F1B/subunit beta, ATP5MC1/subunit c (homooctomer), MT-ATP6/subunit a, MT-ATP8/subunit 8, ATP5ME/subunit e, ATP5MF/subunit f, ATP5MG/subunit g, ATP5MK/subunit k, ATP5MJ/subunit j, ATP5F1C/subunit gamma, ATP5F1D/subunit delta, ATP5F1E/subunit epsilon, ATP5PF/subunit F6, ATP5PB/subunit b, ATP5PD/subunit d, ATP5PO/subunit OSCP. ATP synthase complex consists of a soluble F(1) head domain (subunits alpha(3) and beta(3)) - the catalytic core - and a membrane F(0) domain - the membrane proton channel (subunits c, a, 8, e, f, g, k and j). These two domains are linked by a central stalk (subunits gamma, delta, and epsilon) rotating inside the F1 region and a stationary peripheral stalk (subunits F6, b, d, and OSCP).

The protein localises to the mitochondrion membrane. Its function is as follows. Subunit 8, of the mitochondrial membrane ATP synthase complex (F(1)F(0) ATP synthase or Complex V) that produces ATP from ADP in the presence of a proton gradient across the membrane which is generated by electron transport complexes of the respiratory chain. ATP synthase complex consist of a soluble F(1) head domain - the catalytic core - and a membrane F(1) domain - the membrane proton channel. These two domains are linked by a central stalk rotating inside the F(1) region and a stationary peripheral stalk. During catalysis, ATP synthesis in the catalytic domain of F(1) is coupled via a rotary mechanism of the central stalk subunits to proton translocation. In vivo, can only synthesize ATP although its ATP hydrolase activity can be activated artificially in vitro. Part of the complex F(0) domain. This chain is ATP synthase F(0) complex subunit 8, found in Myxine glutinosa (Atlantic hagfish).